The following is a 426-amino-acid chain: Enolase (426 aa).

Gln-163 serves as a coordination point for (2R)-2-phosphoglycerate. Residue Glu-205 is the Proton donor of the active site. 3 residues coordinate Mg(2+): Asp-242, Glu-286, and Asp-313. Residues Lys-338, Arg-367, Ser-368, and Lys-389 each coordinate (2R)-2-phosphoglycerate. The active-site Proton acceptor is the Lys-338.

Belongs to the enolase family. Requires Mg(2+) as cofactor.

The protein localises to the cytoplasm. It is found in the secreted. It localises to the cell surface. The catalysed reaction is (2R)-2-phosphoglycerate = phosphoenolpyruvate + H2O. The protein operates within carbohydrate degradation; glycolysis; pyruvate from D-glyceraldehyde 3-phosphate: step 4/5. In terms of biological role, catalyzes the reversible conversion of 2-phosphoglycerate (2-PG) into phosphoenolpyruvate (PEP). It is essential for the degradation of carbohydrates via glycolysis. This chain is Enolase, found in Gemmatimonas aurantiaca (strain DSM 14586 / JCM 11422 / NBRC 100505 / T-27).